A 661-amino-acid chain; its full sequence is WD repeat-containing protein 26 (661 aa).

The segment covering 1-27 (MQANGAGGGGGGGGGGGGGGGGGGGQG) has biased composition (gly residues). Disordered stretches follow at residues 1–70 (MQAN…ASNN) and 99–118 (TAAS…KKKK). Low complexity-rich tracts occupy residues 56 to 70 (ANGL…ASNN) and 99 to 113 (TAAS…LGSS). 2 positions are modified to phosphoserine: serine 121 and serine 123. The LisH domain occupies 123 to 155 (SDEDVIRLIGQHLNGLGLNQTVDLLMQESGCRL). In terms of domain architecture, CTLH spans 156–231 (EHPSATKFRN…EYLEDGKVLE (76 aa)). WD repeat units lie at residues 353–392 (EHCN…HLLK), 399–438 (GHAY…GELR), 444–484 (SHED…DSWE), 524–563 (QEDH…LVRK), 566–608 (GVTQ…PIAE), and 611–651 (GHTR…DHQN).

Forms homooligomers. Identified in the CTLH complex that contains GID4, RANBP9 and/or RANBP10, MKLN1, MAEA, RMND5A (or alternatively its paralog RMND5B), GID8, ARMC8, WDR26 and YPEL5. Within this complex, MAEA, RMND5A (or alternatively its paralog RMND5B), GID8, WDR26, and RANBP9 and/or RANBP10 form the catalytic core, while GID4, MKLN1, ARMC8 and YPEL5 have ancillary roles. Interacts with DDB1-CUL4A/B E3 ligase complexes. Forms a complex composed of at least WDR26, a G-beta:gamma unit, and PLCB2. Interacts with AXIN1. In terms of tissue distribution, broadly expressed, with highest levels in heart and skeletal muscle.

The protein resides in the cytoplasm. It is found in the nucleus. The protein localises to the mitochondrion. G-beta-like protein involved in cell signal transduction. Acts as a negative regulator in MAPK signaling pathway. Functions as a scaffolding protein to promote G beta:gamma-mediated PLCB2 plasma membrane translocation and subsequent activation in leukocytes. Core component of the CTLH E3 ubiquitin-protein ligase complex that selectively accepts ubiquitin from UBE2H and mediates ubiquitination and subsequent proteasomal degradation of the transcription factor HBP1. Acts as a negative regulator of the canonical Wnt signaling pathway through preventing ubiquitination of beta-catenin CTNNB1 by the beta-catenin destruction complex, thus negatively regulating CTNNB1 degradation. Serves as a scaffold to coordinate PI3K/AKT pathway-driven cell growth and migration. Protects cells from oxidative stress-induced apoptosis via the down-regulation of AP-1 transcriptional activity as well as by inhibiting cytochrome c release from mitochondria. Also protects cells by promoting hypoxia-mediated autophagy and mitophagy. This is WD repeat-containing protein 26 (WDR26) from Homo sapiens (Human).